We begin with the raw amino-acid sequence, 173 residues long: Crossover junction endodeoxyribonuclease RuvC (173 aa).

Catalysis depends on residues D8, E67, and D139. Residues D8, E67, and D139 each contribute to the Mg(2+) site.

The protein belongs to the RuvC family. As to quaternary structure, homodimer which binds Holliday junction (HJ) DNA. The HJ becomes 2-fold symmetrical on binding to RuvC with unstacked arms; it has a different conformation from HJ DNA in complex with RuvA. In the full resolvosome a probable DNA-RuvA(4)-RuvB(12)-RuvC(2) complex forms which resolves the HJ. Mg(2+) serves as cofactor.

The protein resides in the cytoplasm. It carries out the reaction Endonucleolytic cleavage at a junction such as a reciprocal single-stranded crossover between two homologous DNA duplexes (Holliday junction).. In terms of biological role, the RuvA-RuvB-RuvC complex processes Holliday junction (HJ) DNA during genetic recombination and DNA repair. Endonuclease that resolves HJ intermediates. Cleaves cruciform DNA by making single-stranded nicks across the HJ at symmetrical positions within the homologous arms, yielding a 5'-phosphate and a 3'-hydroxyl group; requires a central core of homology in the junction. The consensus cleavage sequence is 5'-(A/T)TT(C/G)-3'. Cleavage occurs on the 3'-side of the TT dinucleotide at the point of strand exchange. HJ branch migration catalyzed by RuvA-RuvB allows RuvC to scan DNA until it finds its consensus sequence, where it cleaves and resolves the cruciform DNA. The protein is Crossover junction endodeoxyribonuclease RuvC of Klebsiella pneumoniae subsp. pneumoniae (strain ATCC 700721 / MGH 78578).